Consider the following 97-residue polypeptide: Small ribosomal subunit protein bS21 (97 aa).

Positions 37–97 are disordered; sequence EKPSVRKARE…APASSPTTTA (61 aa). A compositionally biased stretch (low complexity) spans 76–97; it reads RAVAPRRPAAAPAPASSPTTTA.

The protein belongs to the bacterial ribosomal protein bS21 family.

In Methylobacterium sp. (strain 4-46), this protein is Small ribosomal subunit protein bS21.